The primary structure comprises 262 residues: Virulence regulon transcriptional activator VirF (262 aa).

Residues 161–258 (DQIRKIVEKN…GITPKKFYLY (98 aa)) enclose the HTH araC/xylS-type domain. DNA-binding regions (H-T-H motif) lie at residues 178-199 (SDIS…ESEK) and 225-248 (INDV…NEYY).

Homodimer.

Functionally, primary regulator of plasmid-encoded virulence genes. Activates the transcription of icsA (virG) and of virB, which is an activator of the ipaABCD virulence regulon. The sequence is that of Virulence regulon transcriptional activator VirF (virF) from Shigella dysenteriae.